Consider the following 162-residue polypeptide: Putative 4-hydroxy-4-methyl-2-oxoglutarate aldolase (162 aa).

Substrate is bound by residues Gly75 to Leu78 and Arg97. Asp98 provides a ligand contact to a divalent metal cation.

It belongs to the class II aldolase/RraA-like family. As to quaternary structure, homotrimer. It depends on a divalent metal cation as a cofactor.

The catalysed reaction is 4-hydroxy-4-methyl-2-oxoglutarate = 2 pyruvate. It carries out the reaction oxaloacetate + H(+) = pyruvate + CO2. Its function is as follows. Catalyzes the aldol cleavage of 4-hydroxy-4-methyl-2-oxoglutarate (HMG) into 2 molecules of pyruvate. Also contains a secondary oxaloacetate (OAA) decarboxylase activity due to the common pyruvate enolate transition state formed following C-C bond cleavage in the retro-aldol and decarboxylation reactions. This is Putative 4-hydroxy-4-methyl-2-oxoglutarate aldolase from Pseudomonas syringae pv. tomato (strain ATCC BAA-871 / DC3000).